Here is a 250-residue protein sequence, read N- to C-terminus: 26S proteasome non-ATPase regulatory subunit 8 (250 aa).

The region spanning 63 to 233 (HDFETFDDYI…QEKPVNLDTV (171 aa)) is the PCI domain.

It belongs to the proteasome subunit S14 family.

Its function is as follows. Acts as a regulatory subunit of the 26S proteasome which is involved in the ATP-dependent degradation of ubiquitinated proteins. This is 26S proteasome non-ATPase regulatory subunit 8 from Caenorhabditis elegans.